Here is a 333-residue protein sequence, read N- to C-terminus: Protein farnesyltransferase/geranylgeranyltransferase type-1 subunit alpha (333 aa).

5 PFTA repeats span residues 61 to 95 (LSSRALALTAEAIGLNAGNYTVWHFRRLLLESLKV), 96 to 130 (DLHVEREFVERVASGNSKNYQIWHHRRWVAEKLGP), 132 to 166 (ARNSELEFTKKILSVDAKHYHAWSHRQWVLQNLGG), 167 to 200 (WEDELSYCSELLAEDIFNNSAWNQRYFVITRSPV), and 207 to 241 (MRESEVLFTVEAIISYPENESSWRYLRGLFKDEST).

The protein belongs to the protein prenyltransferase subunit alpha family. In terms of assembly, heterodimer of FTA and FTB (farnesyltransferase). Heterodimer of an alpha and a beta subunit. The cofactor is Mg(2+).

It catalyses the reaction L-cysteinyl-[protein] + (2E,6E)-farnesyl diphosphate = S-(2E,6E)-farnesyl-L-cysteinyl-[protein] + diphosphate. The enzyme catalyses geranylgeranyl diphosphate + L-cysteinyl-[protein] = S-geranylgeranyl-L-cysteinyl-[protein] + diphosphate. Its function is as follows. Essential subunit of both the farnesyltransferase and the geranylgeranyltransferase complex. Contributes to the transfer of a farnesyl or geranylgeranyl moiety from farnesyl or geranylgeranyl diphosphate to a cysteine at the fourth position from the C-terminus of several proteins having the C-terminal sequence Cys-aliphatic-aliphatic-X. The protein is Protein farnesyltransferase/geranylgeranyltransferase type-1 subunit alpha (FTA) of Pisum sativum (Garden pea).